Here is a 1194-residue protein sequence, read N- to C-terminus: Cohesin subunit SA-2 (1194 aa).

Residues F224–M309 enclose the SCD domain. A disordered region spans residues D986–M1027. Residues M988–T1001 show a composition bias toward low complexity. The segment covering R1002 to R1013 has biased composition (basic residues).

Belongs to the SCC3 family. Part of the cohesin complex which is composed of a heterodimer between a SMC1 protein (SMC1A or SMC1B) and SMC3, which are attached via their hinge domain, and RAD21 which link them at their heads, and one STAG protein (STAG1, STAG2 or STAG3). In cohesin complexes, STAG2 is mutually exclusive with STAG1 and STAG3. Interacts directly with RAD21 in cohesin complex. Phosphorylated by PLK1. The large dissociation of cohesin from chromosome arms during prophase is partly due to its phosphorylation.

It is found in the nucleus. The protein localises to the chromosome. It localises to the centromere. Component of cohesin complex, a complex required for the cohesion of sister chromatids after DNA replication. The cohesin complex apparently forms a large proteinaceous ring within which sister chromatids can be trapped. At anaphase, the complex is cleaved and dissociates from chromatin, allowing sister chromatids to segregate. The cohesin complex may also play a role in spindle pole assembly during mitosis. This chain is Cohesin subunit SA-2 (stag2), found in Xenopus laevis (African clawed frog).